We begin with the raw amino-acid sequence, 184 residues long: ATP synthase subunit delta (184 aa).

This sequence belongs to the ATPase delta chain family. As to quaternary structure, F-type ATPases have 2 components, F(1) - the catalytic core - and F(0) - the membrane proton channel. F(1) has five subunits: alpha(3), beta(3), gamma(1), delta(1), epsilon(1). F(0) has three main subunits: a(1), b(2) and c(10-14). The alpha and beta chains form an alternating ring which encloses part of the gamma chain. F(1) is attached to F(0) by a central stalk formed by the gamma and epsilon chains, while a peripheral stalk is formed by the delta and b chains.

The protein resides in the cell inner membrane. F(1)F(0) ATP synthase produces ATP from ADP in the presence of a proton or sodium gradient. F-type ATPases consist of two structural domains, F(1) containing the extramembraneous catalytic core and F(0) containing the membrane proton channel, linked together by a central stalk and a peripheral stalk. During catalysis, ATP synthesis in the catalytic domain of F(1) is coupled via a rotary mechanism of the central stalk subunits to proton translocation. Functionally, this protein is part of the stalk that links CF(0) to CF(1). It either transmits conformational changes from CF(0) to CF(1) or is implicated in proton conduction. The polypeptide is ATP synthase subunit delta (Rickettsia felis (strain ATCC VR-1525 / URRWXCal2) (Rickettsia azadi)).